A 434-amino-acid polypeptide reads, in one-letter code: Beta-enolase (434 aa).

Ala2 carries the post-translational modification N-acetylalanine. Thr72 bears the Phosphothreonine mark. Phosphoserine is present on residues Ser83 and Ser157. Residues His158 and Glu167 each coordinate substrate. Ser176 carries the post-translational modification Phosphoserine. Thr205 carries the post-translational modification Phosphothreonine. Glu210 (proton donor) is an active-site residue. Thr229 carries the phosphothreonine modification. A Phosphotyrosine modification is found at Tyr236. Asp245 lines the Mg(2+) pocket. A Phosphoserine modification is found at Ser263. Residues Glu293 and Asp318 each contribute to the substrate site. The Mg(2+) site is built by Glu293 and Asp318. Lys343 (proton acceptor) is an active-site residue. Residues 370–373 (SHRS) and Lys394 contribute to the substrate site.

It belongs to the enolase family. Mammalian enolase is composed of 3 isozyme subunits, alpha, beta and gamma, which can form homodimers or heterodimers which are cell-type and development-specific. Interacts with PNKD. Mg(2+) serves as cofactor. As to expression, the alpha/alpha homodimer is expressed in embryo and in most adult tissues. The alpha/beta heterodimer and the beta/beta homodimer are found in striated muscle, and the alpha/gamma heterodimer and the gamma/gamma homodimer in neurons.

Its subcellular location is the cytoplasm. The catalysed reaction is (2R)-2-phosphoglycerate = phosphoenolpyruvate + H2O. The protein operates within carbohydrate degradation; glycolysis; pyruvate from D-glyceraldehyde 3-phosphate: step 4/5. Its function is as follows. Glycolytic enzyme that catalyzes the conversion of 2-phosphoglycerate to phosphoenolpyruvate. Appears to have a function in striated muscle development and regeneration. In Rattus norvegicus (Rat), this protein is Beta-enolase (Eno3).